A 338-amino-acid chain; its full sequence is S-adenosylmethionine:tRNA ribosyltransferase-isomerase (338 aa).

The protein belongs to the QueA family. Monomer.

It localises to the cytoplasm. The catalysed reaction is 7-aminomethyl-7-carbaguanosine(34) in tRNA + S-adenosyl-L-methionine = epoxyqueuosine(34) in tRNA + adenine + L-methionine + 2 H(+). The protein operates within tRNA modification; tRNA-queuosine biosynthesis. Its function is as follows. Transfers and isomerizes the ribose moiety from AdoMet to the 7-aminomethyl group of 7-deazaguanine (preQ1-tRNA) to give epoxyqueuosine (oQ-tRNA). In Francisella tularensis subsp. holarctica (strain FTNF002-00 / FTA), this protein is S-adenosylmethionine:tRNA ribosyltransferase-isomerase.